Here is a 231-residue protein sequence, read N- to C-terminus: Ureidoacrylate amidohydrolase RutB (231 aa).

Residue aspartate 25 is the Proton acceptor of the active site. Lysine 134 is an active-site residue. Catalysis depends on cysteine 167, which acts as the Nucleophile.

It belongs to the isochorismatase family. RutB subfamily.

It catalyses the reaction (Z)-3-ureidoacrylate + H2O + H(+) = (Z)-3-aminoacrylate + NH4(+) + CO2. It carries out the reaction (Z)-3-ureidoacrylate + H2O = (Z)-3-aminoacrylate + carbamate + H(+). The enzyme catalyses (Z)-2-methylureidoacrylate + H2O + H(+) = (Z)-2-methylaminoacrylate + NH4(+) + CO2. Hydrolyzes ureidoacrylate to form aminoacrylate and carbamate. The carbamate hydrolyzes spontaneously, thereby releasing one of the nitrogen atoms of the pyrimidine ring as ammonia and one of its carbon atoms as CO2. In Escherichia coli O157:H7 (strain EC4115 / EHEC), this protein is Ureidoacrylate amidohydrolase RutB.